Reading from the N-terminus, the 1046-residue chain is Protein HBT1 (1046 aa).

Disordered stretches follow at residues 1–455 (MNMN…AAEK), 469–894 (DYQQ…LGGA), and 908–1046 (PSLI…RSEI). Serine 41 carries the phosphoserine modification. Positions 81-96 (KDSETPHEDTEADANR) are enriched in basic and acidic residues. Composition is skewed to polar residues over residues 98–149 (ANVT…SPPT), 175–191 (IATT…TSPV), and 228–301 (ANTG…NTDS). A Phosphoserine modification is found at serine 303. Positions 327 to 341 (VYTSTGPKSNVSSGM) are enriched in polar residues. Serine 363 carries the phosphoserine modification. Polar residues-rich tracts occupy residues 389–408 (QTGL…QQTM) and 420–429 (GFVSQQPSYH). The span at 430 to 455 (DSNKNIQHPEKNKVDNKNISERAAEK) shows a compositional bias: basic and acidic residues. Positions 488–498 (YSSSAGKNKNL) are enriched in polar residues. Position 491 is a phosphoserine (serine 491). Residues 529 to 538 (GHMKYNDNGR) show a composition bias toward basic and acidic residues. The segment covering 548-559 (QAGSQNTNNNID) has biased composition (polar residues). Serine 561 is modified (phosphoserine). Residues 570 to 582 (GLSNDATTRNNVV) are compositionally biased toward polar residues. Positions 586–597 (MKDEDMNEDSTK) are enriched in basic and acidic residues. The segment covering 605 to 619 (YLDDVEDYHENDIDD) has biased composition (acidic residues). A compositionally biased stretch (basic and acidic residues) spans 621–630 (SNAKKNDLYS). Residue serine 671 is modified to Phosphoserine. A compositionally biased stretch (polar residues) spans 742-756 (FTNNPETGTTGNVDT). The segment covering 773–782 (DDSKNTDTHL) has biased composition (basic and acidic residues). Composition is skewed to polar residues over residues 792-802 (NSRSGDTTYSK) and 837-855 (SSEQ…NQEY). Phosphotyrosine is present on tyrosine 855. At serine 857 the chain carries Phosphoserine. The span at 868-890 (KVLEEDAPGYKREVDLKNKRRTD) shows a compositional bias: basic and acidic residues. Residues 922-951 (DTNTSSSQKPSEGTYPETTSYSIHNETTSQ) are compositionally biased toward polar residues. The span at 952–963 (GRKVSVGSMGSG) shows a compositional bias: low complexity. Residues 964–976 (KSKHHHNHHRHSR) are compositionally biased toward basic residues. Serine 1005 bears the Phosphoserine mark. Residues 1006-1019 (DEGEQDYHDDEQGE) are compositionally biased toward acidic residues. The residue at position 1034 (serine 1034) is a Phosphoserine.

As to quaternary structure, conjugated with HUB1. HUB1 has not the classical C-terminal Gly residue, so it is still unknown how conjugation may occur.

The protein resides in the cytoplasm. Its function is as follows. Polarity-determining protein which forms a conjugate with the ubiquitin-like modifier HUB1. Involved in bud site selection and cellular morphogenesis during conjugation. Required for survival during stationary phase. The chain is Protein HBT1 (HBT1) from Saccharomyces cerevisiae (strain ATCC 204508 / S288c) (Baker's yeast).